The chain runs to 531 residues: UDP-glucuronosyltransferase 1A7 (531 aa).

A signal peptide spans 1-25; sequence MAPADFPASLPLCVCLLLASGLAQA. N-linked (GlcNAc...) asparagine glycosylation is found at Asn293 and Asn431. A helical membrane pass occupies residues 489 to 509; that stretch reads VIGFLLAIVLTVVFIVFKCCA.

Belongs to the UDP-glycosyltransferase family. As to quaternary structure, homodimer. Homooligomer. Interacts with UGT1A1, UGT1A3, UGT1A4, UGT1A6, UGT1A8, UGT1A9 and UGT1A10 to form heterodimers. As to expression, widely expressed with highest levels detected in colon and kidney.

It is found in the endoplasmic reticulum membrane. The catalysed reaction is glucuronate acceptor + UDP-alpha-D-glucuronate = acceptor beta-D-glucuronoside + UDP + H(+). It carries out the reaction 17alpha-estradiol + UDP-alpha-D-glucuronate = 17alpha-estradiol 3-O-(beta-D-glucuronate) + UDP + H(+). It catalyses the reaction prunetin + UDP-alpha-D-glucuronate = prunetin-5-O-beta-D-glucuronide + UDP. The enzyme catalyses 5-epi-5-F2t-IsoP + UDP-alpha-D-glucuronate = 5-epi-5-F2t-IsoP-glucuronide + UDP + H(+). The catalysed reaction is (E)-ferulate + UDP-alpha-D-glucuronate = (E)-ferulic acid beta-D-glucuronate ester + UDP. It carries out the reaction candesartan + UDP-alpha-D-glucuronate = candesartan O-beta-D-glucuronoside + UDP. It catalyses the reaction SN-38 + UDP-alpha-D-glucuronate = SN-38 O-beta-D-glucuronide + UDP + H(+). The enzyme catalyses mycophenolate + UDP-alpha-D-glucuronate = mycophenolate 7-O-beta-D-glucuronide + UDP + H(+). In terms of biological role, UDP-glucuronosyltransferase (UGT) that catalyzes phase II biotransformation reactions in which lipophilic substrates are conjugated with glucuronic acid to increase the metabolite's water solubility, thereby facilitating excretion into either the urine or bile. Essential for the elimination and detoxification of drugs, xenobiotics and endogenous compounds. Catalyzes the glucuronidation of endogenous estrogen hormone epiestradiol. Involved in the glucuronidation of F2-isoprostane (5-epi-5-F2t-IsoP). Involved in the glucuronidation of the phytochemical ferulic acid at the carboxylic acid group. Also catalyzes the glucuronidation of the isoflavones genistein, daidzein, glycitein, formononetin, biochanin A and prunetin, which are phytoestrogens with anticancer and cardiovascular properties. Involved in the glucuronidation of the AGTR1 angiotensin receptor antagonist caderastan, a drug which can inhibit the effect of angiotensin II. Involved in the biotransformation of 7-ethyl-10-hydroxycamptothecin (SN-38), the pharmacologically active metabolite of the anticancer drug irinotecan. Also metabolizes mycophenolate, an immunosuppressive agent. In Mus musculus (Mouse), this protein is UDP-glucuronosyltransferase 1A7.